A 500-amino-acid polypeptide reads, in one-letter code: NAD(P)H-quinone oxidoreductase chain 4, chloroplastic (500 aa).

Transmembrane regions (helical) follow at residues 4–24 (FPWL…IFFL), 37–57 (ICIC…HFQL), 87–107 (IGPI…AWPI), 113–130 (LFHF…GSFS), 134–154 (LLLF…LLAM), 167–187 (FILY…GVAL), 208–228 (VLEI…LPII), 242–262 (HYST…YGLI), 272–292 (AHSI…IYAA), 305–325 (IAYS…SLTD), 330–350 (GALL…FLAG), 386–406 (LALP…GIIT), 411–431 (VLIP…LTPI), and 462–482 (LFLS…PDFV).

This sequence belongs to the complex I subunit 4 family.

Its subcellular location is the plastid. The protein resides in the chloroplast thylakoid membrane. The enzyme catalyses a plastoquinone + NADH + (n+1) H(+)(in) = a plastoquinol + NAD(+) + n H(+)(out). The catalysed reaction is a plastoquinone + NADPH + (n+1) H(+)(in) = a plastoquinol + NADP(+) + n H(+)(out). This chain is NAD(P)H-quinone oxidoreductase chain 4, chloroplastic, found in Atropa belladonna (Belladonna).